Reading from the N-terminus, the 195-residue chain is Protein GrpE (195 aa).

It belongs to the GrpE family. As to quaternary structure, homodimer.

The protein localises to the cytoplasm. Participates actively in the response to hyperosmotic and heat shock by preventing the aggregation of stress-denatured proteins, in association with DnaK and GrpE. It is the nucleotide exchange factor for DnaK and may function as a thermosensor. Unfolded proteins bind initially to DnaJ; upon interaction with the DnaJ-bound protein, DnaK hydrolyzes its bound ATP, resulting in the formation of a stable complex. GrpE releases ADP from DnaK; ATP binding to DnaK triggers the release of the substrate protein, thus completing the reaction cycle. Several rounds of ATP-dependent interactions between DnaJ, DnaK and GrpE are required for fully efficient folding. The chain is Protein GrpE from Francisella tularensis subsp. holarctica (strain FTNF002-00 / FTA).